The primary structure comprises 660 residues: UvrABC system protein B (660 aa).

Residues 24 to 177 (KGFKEGNQFE…DDLARALIDL (154 aa)) enclose the Helicase ATP-binding domain. 37–44 (GVTGSGKT) lines the ATP pocket. The Beta-hairpin motif lies at 90–113 (YYDYYQPEAYVPQSDTYIAKDSSV). The 167-residue stretch at 428 to 594 (QIDDLVSEVN…TIQKSVRDLI (167 aa)) folds into the Helicase C-terminal domain. Residues 620–655 (EKHIADIEKKMKKAAAELNFEAAAEYRDKLIMLKNT) enclose the UVR domain.

It belongs to the UvrB family. In terms of assembly, forms a heterotetramer with UvrA during the search for lesions. Interacts with UvrC in an incision complex.

It localises to the cytoplasm. Its function is as follows. The UvrABC repair system catalyzes the recognition and processing of DNA lesions. A damage recognition complex composed of 2 UvrA and 2 UvrB subunits scans DNA for abnormalities. Upon binding of the UvrA(2)B(2) complex to a putative damaged site, the DNA wraps around one UvrB monomer. DNA wrap is dependent on ATP binding by UvrB and probably causes local melting of the DNA helix, facilitating insertion of UvrB beta-hairpin between the DNA strands. Then UvrB probes one DNA strand for the presence of a lesion. If a lesion is found the UvrA subunits dissociate and the UvrB-DNA preincision complex is formed. This complex is subsequently bound by UvrC and the second UvrB is released. If no lesion is found, the DNA wraps around the other UvrB subunit that will check the other stand for damage. The polypeptide is UvrABC system protein B (Agathobacter rectalis (strain ATCC 33656 / DSM 3377 / JCM 17463 / KCTC 5835 / VPI 0990) (Eubacterium rectale)).